Here is a 614-residue protein sequence, read N- to C-terminus: MVNVSVLSPVDDKKARLKHLIQRLPNLPGVYKMLGKNGDILYVGKAKSLKSRVNSYFAKTIDHPKTRALVARIHNIETIITRSETEALLLEQNLIKEYRPPYNVLLRDDKSYLYVFISADQPYPRLAYGRGKVNHQKGCFFGPFPSAHAAKETLVLMQKMFQMRQCTNTFFKQRKRPCLEYQIKRCRAPCVGLVSAEEYSEDVNNTIRFLKGDSSDIHSALIEKMEASAEELDFEKAVFYRDQLSMLREVQAKQAVYTVQGEADVIAIASQVGMTCVNVLTVRGGRVLGGKNYFPDVDSSQPLADNLSAFITSFYFQVTDDLPAEIMLSHELPDQVAVSEALASHFGSKVVIKTNVREHRAEWLDLAKLNTNNALKTKLGDYLELHARFGALKDVLADITDRTIDRIECFDISHTMGEATIGGCVVFDQSGSRRRDYRQYAIHDIVGGDDYAAMKQVLTRRYKKQPLPDLLLIDGGKGQLGIAKEVLTELGMLGDTLLIGVAKGEGRKAGLEVLHFIDHEPLDLPMDSKALHLLMHIRDEAHRFAITAHRKKRDKRRSSSVLEVIPGLGEKRRRDLLNHFGGLQQLLGASQQELAGVQGIGPILAKTVYKVLHE.

The 79-residue stretch at 26-104 (NLPGVYKMLG…IKEYRPPYNV (79 aa)) folds into the GIY-YIG domain. One can recognise a UVR domain in the interval 215–250 (SDIHSALIEKMEASAEELDFEKAVFYRDQLSMLREV).

The protein belongs to the UvrC family. Interacts with UvrB in an incision complex.

It localises to the cytoplasm. Functionally, the UvrABC repair system catalyzes the recognition and processing of DNA lesions. UvrC both incises the 5' and 3' sides of the lesion. The N-terminal half is responsible for the 3' incision and the C-terminal half is responsible for the 5' incision. The sequence is that of UvrABC system protein C from Psychrobacter arcticus (strain DSM 17307 / VKM B-2377 / 273-4).